The sequence spans 236 residues: uncharacterized protein (236 aa).

Positions 1-69 (MLKYQQIATE…RGSGIFVRKH (69 aa)) constitute an HTH gntR-type domain. A DNA-binding region (H-T-H motif) is located at residues 29 to 48 (LETLMAQFEVSKSTITKSLE).

This is an uncharacterized protein from Bacillus subtilis (strain 168).